The primary structure comprises 57 residues: Potassium channel toxin gamma-KTx 2.1 (57 aa).

Positions 1 to 21 (MKISFVLLLTLFICSIGWSEA) are cleaved as a signal peptide. Disulfide bonds link Cys-28/Cys-49, Cys-34/Cys-54, and Cys-38/Cys-56.

Belongs to the short scorpion toxin superfamily. Potassium channel inhibitor family. Gamma-KTx 2 subfamily. As to expression, expressed by the venom gland.

It is found in the secreted. Functionally, blocks human and/or rat Kv11.1/KCNH2/ERG1, Kv11.2/KCNH6/ERG2 and Kv11.3/KCNH7/ERG3 by binding to channel outer vestibule (S5P domain) with a 1:1 stoichiometry. Inhibition data are the following: hERG1 (reversible, Kd=7.7 nM, IC(50)=3.3 nM, IC(50)=11.9 nM), rERG1 (reversible, Kd=19 nM), hERG2 (reversible, Kd=77 nM), rERG2 (irreversible, Kd=4.2 nM), hERG3 (reversible, Kd=11.5 nM) and rERG3 (reversible, Kd=747 nM) potassium channels. Also has a minimal effect on rat ELK1/KCNH4 potassium channels (9% inhibition at 100 nM). Both this toxin and CnErgTx1 (AC Q86QT3) share mechanism of action and have overlapping binding sites on ERG1. The potency of these two toxins is not affected by elevating potassium ion concentration from 2 to 98 mM. In addition, at high toxin concentrations, block of ERG1 macroscopic currents by these two toxins is incomplete (88%). The blockade by this toxin is preferentially closed channel state-dependent, with a component of open, but not inactive state-dependent blockade. This toxin produces a concentration-dependent prolongation of QTc in the isolated rabbit heart (16.3% at 100 nM). This Mesobuthus eupeus (Lesser Asian scorpion) protein is Potassium channel toxin gamma-KTx 2.1.